We begin with the raw amino-acid sequence, 356 residues long: Histidinol-phosphate aminotransferase (356 aa).

Lys214 bears the N6-(pyridoxal phosphate)lysine mark.

Belongs to the class-II pyridoxal-phosphate-dependent aminotransferase family. Histidinol-phosphate aminotransferase subfamily. In terms of assembly, homodimer. It depends on pyridoxal 5'-phosphate as a cofactor.

It catalyses the reaction L-histidinol phosphate + 2-oxoglutarate = 3-(imidazol-4-yl)-2-oxopropyl phosphate + L-glutamate. It participates in amino-acid biosynthesis; L-histidine biosynthesis; L-histidine from 5-phospho-alpha-D-ribose 1-diphosphate: step 7/9. The protein is Histidinol-phosphate aminotransferase of Escherichia coli O17:K52:H18 (strain UMN026 / ExPEC).